Here is a 679-residue protein sequence, read N- to C-terminus: Glycine--tRNA ligase beta subunit (679 aa).

The protein belongs to the class-II aminoacyl-tRNA synthetase family. Tetramer of two alpha and two beta subunits.

It is found in the cytoplasm. It carries out the reaction tRNA(Gly) + glycine + ATP = glycyl-tRNA(Gly) + AMP + diphosphate. This is Glycine--tRNA ligase beta subunit from Streptococcus pyogenes serotype M4 (strain MGAS10750).